A 1369-amino-acid chain; its full sequence is ATP-dependent RNA helicase DHX29 (1369 aa).

2 disordered regions span residues 27 to 75 and 176 to 226; these read SAEA…TNDS and SQEF…KNME. 3 positions are modified to phosphoserine: S71, S192, and S200. The segment covering 189 to 201 has biased composition (polar residues); the sequence is KFQSPQIQATISP. Over residues 208 to 226 the composition is skewed to basic and acidic residues; the sequence is KTYEEDPKSKPKKEEKNME. Coiled coils occupy residues 222–256, 283–310, and 492–519; these read EKNM…EEEE, LEKN…LEDH, and IAKL…NSED. Residues 502–526 are disordered; that stretch reads QQQQQQQHSENKRENSEDPEESWEN. The 174-residue stretch at 582 to 755 folds into the Helicase ATP-binding domain; that stretch reads VETLKRHRVV…FTHCPILRIS (174 aa). Residue 595–602 coordinates ATP; sequence GETGSGKS. The DEAH box signature appears at 702–705; the sequence is DEVH. The Helicase C-terminal domain maps to 849–1026; that stretch reads LILELLAYLD…ELCLHIMKCN (178 aa).

It belongs to the DEAD box helicase family. DEAH subfamily. In terms of assembly, part of the 43S pre-initiation complex (PIC) that contains at least Met-tRNA, EIF1, EIF1A (EIF1AX or EIF1AY), EIF2S1, EIF2S2, EIF2S3, EIF3A, EIF3B, EIF3C, EIF3D, EIF3E, EIF3F, EIF3G, EIF3H, EIF3I, EIF3J, EIF3K, EIF3L, EIF3M, DHX29 and the 40S ribosomal subunit.

The protein localises to the cytoplasm. The catalysed reaction is ATP + H2O = ADP + phosphate + H(+). Functionally, ATP-binding RNA helicase involved in translation initiation. Part of the 43S pre-initiation complex that is required for efficient initiation on mRNAs of higher eukaryotes with structured 5'-UTRs by promoting efficient NTPase-dependent 48S complex formation. Specifically binds to the 40S ribosome near the mRNA entrance. Does not possess a processive helicase activity. This chain is ATP-dependent RNA helicase DHX29, found in Homo sapiens (Human).